A 235-amino-acid chain; its full sequence is Uridylate kinase (235 aa).

9 to 12 (KLSG) contributes to the ATP binding site. A UMP-binding site is contributed by Gly-51. The ATP site is built by Gly-52 and Arg-56. UMP contacts are provided by residues Asp-71 and 132–139 (TGNPYFTT). ATP-binding residues include Thr-159, Tyr-165, and Asp-168.

The protein belongs to the UMP kinase family. As to quaternary structure, homohexamer.

The protein localises to the cytoplasm. The catalysed reaction is UMP + ATP = UDP + ADP. It functions in the pathway pyrimidine metabolism; CTP biosynthesis via de novo pathway; UDP from UMP (UMPK route): step 1/1. With respect to regulation, inhibited by UTP. Functionally, catalyzes the reversible phosphorylation of UMP to UDP. The sequence is that of Uridylate kinase from Christiangramia forsetii (strain DSM 17595 / CGMCC 1.15422 / KT0803) (Gramella forsetii).